A 373-amino-acid chain; its full sequence is tRNA (guanine(26)-N(2))-dimethyltransferase (373 aa).

The 364-residue stretch at 2–365 (KIISEGETKL…AELSDLVVLI (364 aa)) folds into the Trm1 methyltransferase domain. Residues arginine 35, arginine 66, aspartate 86, aspartate 113, and alanine 114 each coordinate S-adenosyl-L-methionine.

It belongs to the class I-like SAM-binding methyltransferase superfamily. Trm1 family.

The enzyme catalyses guanosine(26) in tRNA + 2 S-adenosyl-L-methionine = N(2)-dimethylguanosine(26) in tRNA + 2 S-adenosyl-L-homocysteine + 2 H(+). Dimethylates a single guanine residue at position 26 of a number of tRNAs using S-adenosyl-L-methionine as donor of the methyl groups. The polypeptide is tRNA (guanine(26)-N(2))-dimethyltransferase (Methanococcus maripaludis (strain C5 / ATCC BAA-1333)).